Consider the following 276-residue polypeptide: Shikimate dehydrogenase (NADP(+)) (276 aa).

Shikimate contacts are provided by residues 15-17 (SKS) and T62. The active-site Proton acceptor is K66. E78 is an NADP(+) binding site. Residues N87 and D103 each contribute to the shikimate site. NADP(+) contacts are provided by residues 127–131 (GAGGV), 150–155 (NRTHIK), and M214. Y216 is a shikimate binding site. G239 is an NADP(+) binding site.

The protein belongs to the shikimate dehydrogenase family. As to quaternary structure, homodimer.

The enzyme catalyses shikimate + NADP(+) = 3-dehydroshikimate + NADPH + H(+). The protein operates within metabolic intermediate biosynthesis; chorismate biosynthesis; chorismate from D-erythrose 4-phosphate and phosphoenolpyruvate: step 4/7. Involved in the biosynthesis of the chorismate, which leads to the biosynthesis of aromatic amino acids. Catalyzes the reversible NADPH linked reduction of 3-dehydroshikimate (DHSA) to yield shikimate (SA). The polypeptide is Shikimate dehydrogenase (NADP(+)) (Haemophilus ducreyi (strain 35000HP / ATCC 700724)).